The primary structure comprises 721 residues: Polyribonucleotide nucleotidyltransferase (721 aa).

Mg(2+) contacts are provided by Asp-495 and Asp-501. In terms of domain architecture, KH spans 562 to 621 (PRLLSFRIDPELIGTVIGPGGRTIKGITERTNTKIDIEDSGIVTIASHDGAAAEEAQKII). The S1 motif domain occupies 631–699 (GEMFSGSITR…NRGRINLTLR (69 aa)). The disordered stretch occupies residues 700–721 (GVPQSGESTEVEPQPTPVAPLS).

Belongs to the polyribonucleotide nucleotidyltransferase family. Mg(2+) is required as a cofactor.

It localises to the cytoplasm. It carries out the reaction RNA(n+1) + phosphate = RNA(n) + a ribonucleoside 5'-diphosphate. Functionally, involved in mRNA degradation. Catalyzes the phosphorolysis of single-stranded polyribonucleotides processively in the 3'- to 5'-direction. The protein is Polyribonucleotide nucleotidyltransferase of Synechococcus sp. (strain CC9902).